A 272-amino-acid chain; its full sequence is 3-methyl-2-oxobutanoate hydroxymethyltransferase (272 aa).

Positions 52 and 91 each coordinate Mg(2+). Residues 52 to 53 (DS), Asp-91, and Lys-121 each bind 3-methyl-2-oxobutanoate. Residue Glu-123 coordinates Mg(2+). The active-site Proton acceptor is the Glu-190.

The protein belongs to the PanB family. As to quaternary structure, homodecamer; pentamer of dimers. Mg(2+) serves as cofactor.

Its subcellular location is the cytoplasm. It catalyses the reaction 3-methyl-2-oxobutanoate + (6R)-5,10-methylene-5,6,7,8-tetrahydrofolate + H2O = 2-dehydropantoate + (6S)-5,6,7,8-tetrahydrofolate. Its pathway is cofactor biosynthesis; (R)-pantothenate biosynthesis; (R)-pantoate from 3-methyl-2-oxobutanoate: step 1/2. Its function is as follows. Catalyzes the reversible reaction in which hydroxymethyl group from 5,10-methylenetetrahydrofolate is transferred onto alpha-ketoisovalerate to form ketopantoate. The polypeptide is 3-methyl-2-oxobutanoate hydroxymethyltransferase (Christiangramia forsetii (strain DSM 17595 / CGMCC 1.15422 / KT0803) (Gramella forsetii)).